A 350-amino-acid polypeptide reads, in one-letter code: Phosphotriesterase-related protein (350 aa).

A divalent metal cation is bound by residues histidine 22, histidine 24, glutamate 169, histidine 201, histidine 230, and aspartate 298.

Belongs to the metallo-dependent hydrolases superfamily. Phosphotriesterase family. The cofactor is a divalent metal cation.

The chain is Phosphotriesterase-related protein from Drosophila persimilis (Fruit fly).